The primary structure comprises 718 residues: Cyclomaltodextrin glucanotransferase (718 aa).

An N-terminal signal peptide occupies residues 1–34; sequence MFQMAKRAFLSTTLTLGLLAGSALPFLPASAAYA. The interval 35–172 is A1; the sequence is DPDIAVTNKQ…GIKIIIDFAP (138 aa). The Ca(2+) site is built by aspartate 61, asparagine 63, asparagine 66, and asparagine 67. A disulfide bond links cysteine 77 and cysteine 84. Positions 85 and 87 each coordinate Ca(2+). 134 to 135 contacts substrate; it reads YW. Asparagine 173 serves as a coordination point for Ca(2+). The interval 173-236 is b; sequence NHTSPAMETD…NLYDLADFNH (64 aa). Position 174 (histidine 174) interacts with substrate. Isoleucine 224 is a binding site for Ca(2+). Residue 227–230 coordinates substrate; it reads NLYD. Aspartate 233 contacts Ca(2+). Residues 237-440 form an A2 region; the sequence is NNATIDKYFK…LRKSNPAIAY (204 aa). Arginine 261 lines the substrate pocket. Aspartate 263 acts as the Nucleophile in catalysis. 266 to 267 provides a ligand contact to substrate; sequence KH. Histidine 267 contacts Ca(2+). Glutamate 291 serves as the catalytic Proton donor. Residues histidine 361, aspartate 405, and arginine 409 each coordinate substrate. Residues 441 to 528 form a c region; sequence GSTQQRWINN…ATAVWQYTAA (88 aa). Residues 529 to 614 form a d region; the sequence is ETTPTIGHVG…SNAYNHFTIL (86 aa). Residues 532–612 enclose the IPT/TIG domain; the sequence is PTIGHVGPVM…VNSNAYNHFT (81 aa). The 106-residue stretch at 613 to 718 folds into the CBM20 domain; the sequence is ILTGDQVTVR…GTATVTVNWQ (106 aa). Residues 615-718 are e; the sequence is TGDQVTVRFV…GTATVTVNWQ (104 aa).

This sequence belongs to the glycosyl hydrolase 13 family. As to quaternary structure, monomer. Requires Ca(2+) as cofactor.

The protein resides in the secreted. It carries out the reaction Cyclizes part of a (1-&gt;4)-alpha-D-glucan chain by formation of a (1-&gt;4)-alpha-D-glucosidic bond.. The sequence is that of Cyclomaltodextrin glucanotransferase (cgt) from Bacillus sp. (strain 6.6.3).